A 261-amino-acid polypeptide reads, in one-letter code: uncharacterized protein (261 aa).

Residues 20 to 34 show a composition bias toward polar residues; the sequence is TMSTPFLESDNSNTQ. A disordered region spans residues 20–55; it reads TMSTPFLESDNSNTQSISGRIGSNNNSNSKNSGGIG. Positions 35–51 are enriched in low complexity; sequence SISGRIGSNNNSNSKNS. Transmembrane regions (helical) follow at residues 113–133, 183–200, and 204–226; these read LFSGLFGGGFILTFILCILLL, LIFWITLYGTPIFWILFF, and IISLQFAWILIPIIALSLNMANV.

The protein belongs to the TVP23 family.

It localises to the membrane. This is an uncharacterized protein from Dictyostelium discoideum (Social amoeba).